Here is a 616-residue protein sequence, read N- to C-terminus: Telomeric repeat-binding factor 2-interacting protein 1 (616 aa).

In terms of domain architecture, BRCT spans 15–98 (FLDPGGQSMR…QQLDPNDYAI (84 aa)). Residues 112-169 (NQGSGRLGYSSEEDAAILKFIEKRQQDAKGNLVWKEMEKRHVTEHSWQSMKDRFLKHL) enclose the Myb-like domain. The tract at residues 174-518 (ADKPTKKSPI…CSHIRETPEE (345 aa)) is disordered. Residues 232–245 (PERASSPPEEPQAA) show a composition bias toward low complexity. A compositionally biased stretch (polar residues) spans 246 to 255 (GQPSQASSND). 2 stretches are compositionally biased toward basic and acidic residues: residues 271–288 (ENPR…EHSS) and 344–358 (RSSR…RDIP). Polar residues-rich tracts occupy residues 363 to 382 (EQSS…SDSG) and 397 to 415 (NANS…ASTP). The span at 431–444 (EDSDVMDDSEECEN) shows a compositional bias: acidic residues. A compositionally biased stretch (basic and acidic residues) spans 468–480 (REPESQAEHHEET). Residues 597 to 613 (SKFGEEEVTRRKSFLAT) carry the Nuclear localization signal motif.

This sequence belongs to the RAP1 family. Homodimer. Component of the shelterin complex (telosome). Interacts with terf2; the interaction is direct.

Its subcellular location is the nucleus. The protein resides in the chromosome. It is found in the telomere. Its function is as follows. Acts both as a regulator of telomere function and as a transcription regulator. Involved in the regulation of telomere length and protection as a component of the shelterin complex (telosome). Does not bind DNA directly: recruited to telomeric double-stranded 5'-TTAGGG-3' repeats via its interaction with terf2. Independently of its function in telomeres, also acts as a transcription regulator: recruited to extratelomeric 5'-TTAGGG-3' sites via its association with terf2 or other factors, and regulates gene expression. In Danio rerio (Zebrafish), this protein is Telomeric repeat-binding factor 2-interacting protein 1 (terf2ip).